A 125-amino-acid polypeptide reads, in one-letter code: Large ribosomal subunit protein bL21 (125 aa).

A compositionally biased stretch (basic residues) spans 75 to 89; sequence FKKRRRQNSKRKRGH. Disordered stretches follow at residues 75-94 and 103-125; these read FKKR…QDLT and AGGA…APEA. Over residues 106-125 the composition is skewed to low complexity; that stretch reads ASPAAAAASSETPAASAPEA.

Belongs to the bacterial ribosomal protein bL21 family. As to quaternary structure, part of the 50S ribosomal subunit. Contacts protein L20.

Its function is as follows. This protein binds to 23S rRNA in the presence of protein L20. In Methylocella silvestris (strain DSM 15510 / CIP 108128 / LMG 27833 / NCIMB 13906 / BL2), this protein is Large ribosomal subunit protein bL21.